Consider the following 375-residue polypeptide: MESILSCPIVSVNARVWRFWSFVLKHDAMRYISIIPVTVMTFFMFLDLGHSWGDFQDVIIKGYFAVLYFNAVLRTLILVKDRKLYENFMEGISKFYFEISRIDDHQIQSLLRSYTTRARMLSISNLALGAIISTCFTVYPMFTGVRGLPYGMFIPGVDGYQSPQYEIIYLVQVVLTFPGCCMYIPFTSFFVSTTLFGLVQIKTLQRQLQTFKDGIGSHENKNADLQVIKLIQDHKRIIAYVSELNSLVTYICFVEFLSFGLMLCALLFLLNVIENHAQIVIVAAYIFMIISQIFAFYWHANEVREESMNIAVAAYSGPWVELDDSIKKKLLLIILRAQQPLEITVGNVYPMTLEMFQSLLNASYSYFTLLRRVYN.

6 helical membrane passes run 32 to 52 (ISIIPVTVMTFFMFLDLGHSW), 58 to 78 (VIIKGYFAVLYFNAVLRTLIL), 125 to 145 (NLALGAIISTCFTVYPMFTGV), 167 to 187 (IIYLVQVVLTFPGCCMYIPFT), 250 to 270 (YICFVEFLSFGLMLCALLFLL), and 279 to 299 (IVIVAAYIFMIISQIFAFYWH).

It belongs to the insect chemoreceptor superfamily. Heteromeric odorant receptor channel (TC 1.A.69) family. As to expression, expressed in female antenna, maxillary palp and proboscis. Expressed in female body. Expressed in male tissues.

The protein localises to the cell membrane. Odorant receptor which complexes with Orco, a coreceptor, to form odorant-sensing units, providing sensitive and prolonged odorant signaling and calcium permeability. Can sense indole, 1-octen-3-ol, 3-methyindole and an insect repellent DEET. This is Odorant receptor 10 from Aedes albopictus (Asian tiger mosquito).